A 310-amino-acid polypeptide reads, in one-letter code: Polyprenyl transferase ntnF (310 aa).

8 consecutive transmembrane segments (helical) span residues histidine 30–isoleucine 50, phenylalanine 63–isoleucine 83, alanine 110–glycine 130, isoleucine 154–valine 174, leucine 185–alanine 205, alanine 230–alanine 250, phenylalanine 255–leucine 275, and isoleucine 286–tryptophan 306.

The protein belongs to the UbiA prenyltransferase family. The cofactor is Mg(2+).

It localises to the membrane. It functions in the pathway secondary metabolite biosynthesis; terpenoid biosynthesis. In terms of biological role, olyprenyl transferase; part of the gene cluster that mediates the biosynthesis of the meroterpenoids nectripenoids A and B, as well as cochliquninone D and isocochliquninone E. The pathway probably begins with the HR-PKS ntnH that catalyzes two chain-extension steps to form a reduced triketide, which then primes the SAT domain in the NR-PKS ntnG to initiate three more cycles of extension to give a linear hexaketide corresponding to the polyketide part of nectripenoids. The FAD-dependent monooxygenase ntnJ then performs an oxidative decarboxylation at C11 of the ntnH/ntnG product, via an electrophilic aromatic hydroxylation with concomitant ipso-decarboxylation. The membrane-bound polyprenyl transferase ntnF then introduces a farnesyl group before the FAD-dependent monooxygenase ntnK functions as the first epoxidase on terminal C12'-C13' olefin, followed by a second epoxidation on C7'-C8' catalyzed by ntnA. The terpene cyclase/mutase ntnI then initiates the sequential tricyclic ring formation through protonation of the terminal epoxide and catalyzes the regioselective and stereoselective 6/6/6-tricyclic ring formation. The cytochrome P450 monooxygenase ntnM may then hydroxylate C1'. The protein is Polyprenyl transferase ntnF of Nectria sp.